The primary structure comprises 514 residues: 2,3-bisphosphoglycerate-independent phosphoglycerate mutase (514 aa).

Residues D14 and S64 each coordinate Mn(2+). S64 acts as the Phosphoserine intermediate in catalysis. Substrate is bound by residues H125, 155 to 156, R187, R193, 263 to 266, and K336; these read RD and RADR. 5 residues coordinate Mn(2+): D403, H407, D444, H445, and H463.

It belongs to the BPG-independent phosphoglycerate mutase family. In terms of assembly, monomer. Mn(2+) serves as cofactor.

It carries out the reaction (2R)-2-phosphoglycerate = (2R)-3-phosphoglycerate. The protein operates within carbohydrate degradation; glycolysis; pyruvate from D-glyceraldehyde 3-phosphate: step 3/5. Catalyzes the interconversion of 2-phosphoglycerate and 3-phosphoglycerate. The polypeptide is 2,3-bisphosphoglycerate-independent phosphoglycerate mutase (Escherichia coli O1:K1 / APEC).